The chain runs to 481 residues: ATP synthase subunit beta, chloroplastic (481 aa).

Position 162-169 (Gly162–Thr169) interacts with ATP.

Belongs to the ATPase alpha/beta chains family. F-type ATPases have 2 components, CF(1) - the catalytic core - and CF(0) - the membrane proton channel. CF(1) has five subunits: alpha(3), beta(3), gamma(1), delta(1), epsilon(1). CF(0) has four main subunits: a(1), b(1), b'(1) and c(9-12).

It localises to the plastid. Its subcellular location is the chloroplast thylakoid membrane. The catalysed reaction is ATP + H2O + 4 H(+)(in) = ADP + phosphate + 5 H(+)(out). Functionally, produces ATP from ADP in the presence of a proton gradient across the membrane. The catalytic sites are hosted primarily by the beta subunits. The polypeptide is ATP synthase subunit beta, chloroplastic (Oltmannsiellopsis viridis (Marine flagellate)).